A 468-amino-acid chain; its full sequence is UDP-N-acetylmuramate--L-alanine ligase (468 aa).

114–120 (GTHGKTT) contributes to the ATP binding site.

This sequence belongs to the MurCDEF family.

It is found in the cytoplasm. The enzyme catalyses UDP-N-acetyl-alpha-D-muramate + L-alanine + ATP = UDP-N-acetyl-alpha-D-muramoyl-L-alanine + ADP + phosphate + H(+). Its pathway is cell wall biogenesis; peptidoglycan biosynthesis. Its function is as follows. Cell wall formation. The polypeptide is UDP-N-acetylmuramate--L-alanine ligase (Methylobacterium radiotolerans (strain ATCC 27329 / DSM 1819 / JCM 2831 / NBRC 15690 / NCIMB 10815 / 0-1)).